A 499-amino-acid polypeptide reads, in one-letter code: Probable cytosol aminopeptidase (499 aa).

The Mn(2+) site is built by lysine 267 and aspartate 272. Lysine 279 is an active-site residue. The Mn(2+) site is built by aspartate 290, aspartate 349, and glutamate 351. Arginine 353 is a catalytic residue.

This sequence belongs to the peptidase M17 family. The cofactor is Mn(2+).

It localises to the cytoplasm. The catalysed reaction is Release of an N-terminal amino acid, Xaa-|-Yaa-, in which Xaa is preferably Leu, but may be other amino acids including Pro although not Arg or Lys, and Yaa may be Pro. Amino acid amides and methyl esters are also readily hydrolyzed, but rates on arylamides are exceedingly low.. The enzyme catalyses Release of an N-terminal amino acid, preferentially leucine, but not glutamic or aspartic acids.. Its function is as follows. Presumably involved in the processing and regular turnover of intracellular proteins. Catalyzes the removal of unsubstituted N-terminal amino acids from various peptides. The sequence is that of Probable cytosol aminopeptidase from Buchnera aphidicola subsp. Acyrthosiphon pisum (strain 5A).